The following is a 251-amino-acid chain: MCKAFCSCYSYHYHHREKMGIKEYYDKLAKSYDKLYKNKYMRIVEREIIQKEIKDGDFVLDIGCGTGEQLKILNNAVGLDISLEMAKIAKNKTNKPVVVANAEFLPFKNKSFDKAISFFGALNHCNLKRALREVNRVLKDDGIFIFTVANIYDIKWIIKNILKGNFKKVKNAMKKRKGTITKVIDGEKIKVKTRFYDFKEVEDALKKEGFEVVYTFGTNITNSPLDKFIYKSFLKNFASYIGFVAKKVKNR.

To M.jannaschii MJ0638 and MJ1123 and M.tuberculosis Rv2003c.

This is an uncharacterized protein from Methanocaldococcus jannaschii (strain ATCC 43067 / DSM 2661 / JAL-1 / JCM 10045 / NBRC 100440) (Methanococcus jannaschii).